A 425-amino-acid chain; its full sequence is Serine--tRNA ligase (425 aa).

Thr-231 to Glu-233 contributes to the L-serine binding site. ATP is bound by residues Arg-262–Glu-264 and Val-278. Glu-285 contacts L-serine. Glu-349–Ser-352 is an ATP binding site. Thr-384 is an L-serine binding site.

The protein belongs to the class-II aminoacyl-tRNA synthetase family. Type-1 seryl-tRNA synthetase subfamily. In terms of assembly, homodimer. The tRNA molecule binds across the dimer.

Its subcellular location is the cytoplasm. It carries out the reaction tRNA(Ser) + L-serine + ATP = L-seryl-tRNA(Ser) + AMP + diphosphate + H(+). It catalyses the reaction tRNA(Sec) + L-serine + ATP = L-seryl-tRNA(Sec) + AMP + diphosphate + H(+). It participates in aminoacyl-tRNA biosynthesis; selenocysteinyl-tRNA(Sec) biosynthesis; L-seryl-tRNA(Sec) from L-serine and tRNA(Sec): step 1/1. In terms of biological role, catalyzes the attachment of serine to tRNA(Ser). Is also able to aminoacylate tRNA(Sec) with serine, to form the misacylated tRNA L-seryl-tRNA(Sec), which will be further converted into selenocysteinyl-tRNA(Sec). The chain is Serine--tRNA ligase from Dictyoglomus turgidum (strain DSM 6724 / Z-1310).